The sequence spans 103 residues: Large ribosomal subunit protein bL21 (103 aa).

This sequence belongs to the bacterial ribosomal protein bL21 family. As to quaternary structure, part of the 50S ribosomal subunit. Contacts protein L20.

Its function is as follows. This protein binds to 23S rRNA in the presence of protein L20. The chain is Large ribosomal subunit protein bL21 from Pseudoalteromonas atlantica (strain T6c / ATCC BAA-1087).